Here is a 465-residue protein sequence, read N- to C-terminus: Cysteine--tRNA ligase (465 aa).

Position 28 (Cys-28) interacts with Zn(2+). The 'HIGH' region signature appears at 30–40; it reads MTVYDYCHLGH. 3 residues coordinate Zn(2+): Cys-209, His-234, and Glu-238. The 'KMSKS' region signature appears at 266-270; that stretch reads KMSKS. Residue Lys-269 participates in ATP binding.

Belongs to the class-I aminoacyl-tRNA synthetase family. In terms of assembly, monomer. Requires Zn(2+) as cofactor.

The protein localises to the cytoplasm. It carries out the reaction tRNA(Cys) + L-cysteine + ATP = L-cysteinyl-tRNA(Cys) + AMP + diphosphate. This chain is Cysteine--tRNA ligase, found in Methylococcus capsulatus (strain ATCC 33009 / NCIMB 11132 / Bath).